A 410-amino-acid polypeptide reads, in one-letter code: LL-diaminopimelate aminotransferase (410 aa).

Tyr-15 and Gly-42 together coordinate substrate. Pyridoxal 5'-phosphate contacts are provided by residues Tyr-72, Ala-108–Lys-109, Tyr-132, Asn-188, Tyr-219, and Ser-247–Ser-249. Residues Lys-109, Tyr-132, and Asn-188 each contribute to the substrate site. Lys-250 carries the N6-(pyridoxal phosphate)lysine modification. 2 residues coordinate pyridoxal 5'-phosphate: Arg-258 and Asn-293. Substrate is bound by residues Asn-293 and Arg-389.

This sequence belongs to the class-I pyridoxal-phosphate-dependent aminotransferase family. LL-diaminopimelate aminotransferase subfamily. In terms of assembly, homodimer. It depends on pyridoxal 5'-phosphate as a cofactor.

The enzyme catalyses (2S,6S)-2,6-diaminopimelate + 2-oxoglutarate = (S)-2,3,4,5-tetrahydrodipicolinate + L-glutamate + H2O + H(+). The protein operates within amino-acid biosynthesis; L-lysine biosynthesis via DAP pathway; LL-2,6-diaminopimelate from (S)-tetrahydrodipicolinate (aminotransferase route): step 1/1. Its function is as follows. Involved in the synthesis of meso-diaminopimelate (m-DAP or DL-DAP), required for both lysine and peptidoglycan biosynthesis. Catalyzes the direct conversion of tetrahydrodipicolinate to LL-diaminopimelate. In Bacteroides thetaiotaomicron (strain ATCC 29148 / DSM 2079 / JCM 5827 / CCUG 10774 / NCTC 10582 / VPI-5482 / E50), this protein is LL-diaminopimelate aminotransferase.